We begin with the raw amino-acid sequence, 552 residues long: Glutamate--tRNA ligase (552 aa).

The 'HIGH' region signature appears at 102-112; it reads PNPSGPLHIGH.

Belongs to the class-I aminoacyl-tRNA synthetase family. Glutamate--tRNA ligase type 2 subfamily.

Its subcellular location is the cytoplasm. The catalysed reaction is tRNA(Glu) + L-glutamate + ATP = L-glutamyl-tRNA(Glu) + AMP + diphosphate. Functionally, catalyzes the attachment of glutamate to tRNA(Glu) in a two-step reaction: glutamate is first activated by ATP to form Glu-AMP and then transferred to the acceptor end of tRNA(Glu). This chain is Glutamate--tRNA ligase, found in Methanothermobacter marburgensis (strain ATCC BAA-927 / DSM 2133 / JCM 14651 / NBRC 100331 / OCM 82 / Marburg) (Methanobacterium thermoautotrophicum).